The sequence spans 764 residues: Serine/threonine-protein kinase MPS1 (764 aa).

3 disordered regions span residues 66–95, 197–216, and 258–316; these read EEMD…SSHS, ELPL…RNTD, and QAAL…KSSI. Residues 85 to 95 are compositionally biased toward low complexity; sequence TSGHTSTSSHS. Residues 201–216 show a composition bias toward basic and acidic residues; it reads EDSHQTNFKETKRNTD. 2 stretches are compositionally biased toward low complexity: residues 272–292 and 306–315; these read KSRS…KDNS and STGSSSSKSS. The region spanning 440-720 is the Protein kinase domain; the sequence is YEKIELLGRG…LSSTFLQPFM (281 aa). ATP is bound by residues 446 to 454 and Lys468; that span reads LGRGGSSRV. Asp563 serves as the catalytic Proton acceptor.

Belongs to the protein kinase superfamily. Ser/Thr protein kinase family. Autophosphorylated.

It carries out the reaction L-seryl-[protein] + ATP = O-phospho-L-seryl-[protein] + ADP + H(+). It catalyses the reaction L-threonyl-[protein] + ATP = O-phospho-L-threonyl-[protein] + ADP + H(+). The enzyme catalyses L-tyrosyl-[protein] + ATP = O-phospho-L-tyrosyl-[protein] + ADP + H(+). In terms of biological role, involved in mitotic spindle assembly checkpoint signaling, a process that delays anaphase until chromosomes are bioriented on the spindle, and in the repair of incorrect mitotic kinetochore-spindle microtubule attachments. Phosphorylates SPC105 on MELT motifs; phosphorylation is required for recruitment of the BUB1-BUB3 complex to kinetochores. Phosphorylates CNN1, which contributes to the enrichment of CNN1 on anaphase kinetochores. Implicated in spindle pole body (SPD) duplication. Phosphorylates the SPC29 and SPC110 spindle pole body components. The polypeptide is Serine/threonine-protein kinase MPS1 (MPS1) (Saccharomyces cerevisiae (strain ATCC 204508 / S288c) (Baker's yeast)).